Reading from the N-terminus, the 304-residue chain is E3 ubiquitin-protein ligase RNF144B (304 aa).

The segment at 27–245 (PLVTCKLCLC…YDRGPCRNKL (219 aa)) is TRIAD supradomain. Zn(2+) contacts are provided by C31, C34, C54, C57, C122, C127, C146, C149, C154, C157, H162, C167, C194, and C197. An RING-type 1 zinc finger spans residues 31–81 (CKLCLCEQSLDKMTTLQECRCIFCTACLKQYMQLAIREGCGSPITCPDMVC). Residues 102 to 167 (QLYQRLKFER…KDAWHAEVSC (66 aa)) form an IBR-type zinc finger. The RING-type 2; atypical zinc-finger motif lies at 194–223 (CPVCRVYIERNEGCAQMMCKNCKHTFCWYC). C207 is a catalytic residue. The Zn(2+) site is built by C212, C215, C220, C223, H235, and C241. A helical transmembrane segment spans residues 259 to 279 (VVGILVGLGIIALVTSPLLLL).

This sequence belongs to the RBR family. RNF144 subfamily. As to quaternary structure, interacts with UBE2L3, UBE2L6 and LCMT2, as well as with BAX. Interacts with TBK1; this interaction inhibits TBK1 phosphorylation and 'Lys-63'-linked polyubiquitination. Auto-ubiquitinated.

It is found in the mitochondrion membrane. The protein localises to the cytoplasm. It carries out the reaction [E2 ubiquitin-conjugating enzyme]-S-ubiquitinyl-L-cysteine + [acceptor protein]-L-lysine = [E2 ubiquitin-conjugating enzyme]-L-cysteine + [acceptor protein]-N(6)-ubiquitinyl-L-lysine.. It participates in protein modification; protein ubiquitination. E3 ubiquitin-protein ligase which accepts ubiquitin from E2 ubiquitin-conjugating enzymes UBE2L3 and UBE2L6 in the form of a thioester and then directly transfers the ubiquitin to targeted substrates such as LCMT2, thereby promoting their degradation. Induces apoptosis via a p53/TP53-dependent but caspase-independent mechanism. Plays a crucial role in maintaining the genomic stability by controlling the degradation of multiple proteins involved in mitotic progression and DNA damage. Regulates epithelial homeostasis by mediating degradation of CDKN1A and isoform 2 of TP63. Plays a regulatory role in innate immunity by negatively regulating IRF3 activation and IFN-beta production. Mechanistically, inhibits TBK1 phosphorylation and 'Lys-63'-linked polyubiquitination independently of its E3 ligase activity. Alternatively, promotes 'Lys-27' and 'Lys-33'-linked ubiquitination of IFIH1/MDA5, promoting selective autophagic degradation of IFIH1/MDA5 to inhibit antiviral response. The polypeptide is E3 ubiquitin-protein ligase RNF144B (RNF144B) (Bos taurus (Bovine)).